Consider the following 231-residue polypeptide: Uracil-DNA glycosylase (231 aa).

Residue D74 is the Proton acceptor of the active site.

This sequence belongs to the uracil-DNA glycosylase (UDG) superfamily. UNG family.

It localises to the cytoplasm. The enzyme catalyses Hydrolyzes single-stranded DNA or mismatched double-stranded DNA and polynucleotides, releasing free uracil.. Its function is as follows. Excises uracil residues from the DNA which can arise as a result of misincorporation of dUMP residues by DNA polymerase or due to deamination of cytosine. This chain is Uracil-DNA glycosylase, found in Campylobacter jejuni (strain RM1221).